The chain runs to 246 residues: Bis(5'-nucleosyl)-tetraphosphatase PrpE [asymmetrical] (246 aa).

It belongs to the PrpE family. Ni(2+) is required as a cofactor.

It catalyses the reaction P(1),P(4)-bis(5'-guanosyl) tetraphosphate + H2O = GMP + GTP + 2 H(+). Its function is as follows. Asymmetrically hydrolyzes Ap4p to yield AMP and ATP. The sequence is that of Bis(5'-nucleosyl)-tetraphosphatase PrpE [asymmetrical] from Bacillus thuringiensis (strain Al Hakam).